The sequence spans 139 residues: MAVKIKLKRLGKIRSPHYRIVVADSRTRRDGRAIEEIGKYHPTYNPSVMEVDAERVAYWLGVGAQPTEPVLAILKKTGDWQKFKGEPAPAPLLQPAEKAARPSFEAIGGEDEGKGEAITQKKKADKKDEAAAESSASEA.

Residues 84-139 are disordered; it reads KGEPAPAPLLQPAEKAARPSFEAIGGEDEGKGEAITQKKKADKKDEAAAESSASEA.

The protein belongs to the bacterial ribosomal protein bS16 family.

The polypeptide is Small ribosomal subunit protein bS16 (Streptomyces coelicolor (strain ATCC BAA-471 / A3(2) / M145)).